Here is a 194-residue protein sequence, read N- to C-terminus: Cathelicidin-related peptide isoform 3 (194 aa).

A signal peptide spans 1-22 (MQGFFWKTWLVLAVCGTPASLA). Positions 23-164 (HRPLSYGEAL…DQPKRVKRFK (142 aa)) are excised as a propeptide. 2 disulfide bridges follow: Cys79–Cys90 and Cys101–Cys118. The segment covering 125 to 145 (EEEEEEEEEEQKAEAENDEEV) has biased composition (acidic residues). Positions 125–156 (EEEEEEEEEEQKAEAENDEEVEKEKGDEEKDQ) are disordered. The span at 146 to 156 (EKEKGDEEKDQ) shows a compositional bias: basic and acidic residues.

It belongs to the cathelicidin family. In terms of tissue distribution, expressed by the venom gland.

It is found in the secreted. The protein resides in the target cell membrane. Potent antimicrobial peptide against Gram-negative and Gram-positive bacteria. Adopts an amphipathic alpha helical conformation, that may allow to partition into the target membrane. Low hemolytic activities have been observed on mammalian cells. This chain is Cathelicidin-related peptide isoform 3, found in Crotalus durissus cascavella (Northeastern Brazilian rattlesnake).